The primary structure comprises 540 residues: Membrane protein insertase YidC (540 aa).

The next 5 membrane-spanning stretches (helical) occupy residues 1–21 (MVVQ…MMLD), 351–371 (NWGI…FPLT), 418–438 (LGGC…YYML), 464–484 (ILPI…PSSI), and 497–517 (PLIF…YYII).

It belongs to the OXA1/ALB3/YidC family. Type 1 subfamily. In terms of assembly, interacts with the Sec translocase complex via SecD. Specifically interacts with transmembrane segments of nascent integral membrane proteins during membrane integration.

The protein resides in the cell membrane. Required for the insertion and/or proper folding and/or complex formation of integral membrane proteins into the membrane. Involved in integration of membrane proteins that insert both dependently and independently of the Sec translocase complex, as well as at least some lipoproteins. Aids folding of multispanning membrane proteins. This Wigglesworthia glossinidia brevipalpis protein is Membrane protein insertase YidC.